The chain runs to 171 residues: NADH-quinone oxidoreductase subunit I 1 (171 aa).

4Fe-4S ferredoxin-type domains follow at residues 39-71 and 81-110; these read IVLT…LSKA and EHFR…LTPD. Residues cysteine 51, cysteine 54, cysteine 57, cysteine 61, cysteine 90, cysteine 93, cysteine 96, and cysteine 100 each coordinate [4Fe-4S] cluster.

This sequence belongs to the complex I 23 kDa subunit family. NDH-1 is composed of 14 different subunits. Subunits NuoA, H, J, K, L, M, N constitute the membrane sector of the complex. [4Fe-4S] cluster is required as a cofactor.

Its subcellular location is the cell inner membrane. The catalysed reaction is a quinone + NADH + 5 H(+)(in) = a quinol + NAD(+) + 4 H(+)(out). Its function is as follows. NDH-1 shuttles electrons from NADH, via FMN and iron-sulfur (Fe-S) centers, to quinones in the respiratory chain. The immediate electron acceptor for the enzyme in this species is believed to be ubiquinone. Couples the redox reaction to proton translocation (for every two electrons transferred, four hydrogen ions are translocated across the cytoplasmic membrane), and thus conserves the redox energy in a proton gradient. This Rhodopseudomonas palustris (strain HaA2) protein is NADH-quinone oxidoreductase subunit I 1.